Consider the following 775-residue polypeptide: Homoaconitase, mitochondrial (775 aa).

A mitochondrion-targeting transit peptide spans M1–F29. Residues C392, C461, and C464 each coordinate [4Fe-4S] cluster.

This sequence belongs to the aconitase/IPM isomerase family. The cofactor is [4Fe-4S] cluster.

The protein localises to the mitochondrion. The catalysed reaction is (2R,3S)-homoisocitrate = cis-homoaconitate + H2O. Its pathway is amino-acid biosynthesis; L-lysine biosynthesis via AAA pathway; L-alpha-aminoadipate from 2-oxoglutarate: step 3/5. Its function is as follows. Catalyzes the reversible hydration of cis-homoaconitate to (2R,3S)-homoisocitrate, a step in the alpha-aminoadipate pathway for lysine biosynthesis. This chain is Homoaconitase, mitochondrial (lys4), found in Aspergillus oryzae (strain ATCC 42149 / RIB 40) (Yellow koji mold).